Here is a 143-residue protein sequence, read N- to C-terminus: Spanin, inner membrane subunit (143 aa).

Residues 1-7 (MLEFLRK) lie on the Cytoplasmic side of the membrane. The chain crosses the membrane as a helical; Signal-anchor for type II membrane protein span at residues 8–24 (LIPWVLAGMLFGLGWHL). Topologically, residues 25 to 143 (GSDSMDAKWK…QDTIRELQRK (119 aa)) are periplasmic.

Belongs to the T7likevirus i-spanin family. In terms of assembly, interacts (via C-terminus) with the spanin outer lipoprotein subunit (o-spanin) (via C-terminus). Part of the spanin complex which spans the entire periplasmic space. The spanin complex is composed of spanin inner membrane subunit and spanin outer membrane subunit.

Its subcellular location is the host cell inner membrane. Component of the spanin complex that disrupts the host outer membrane and participates in cell lysis during virus exit. The spanin complex conducts the final step in host lysis by disrupting the outer membrane after holin and endolysin action have permeabilized the inner membrane and degraded the host peptidoglycans. Host outer membrane disruption is possibly due to local fusion between the inner and outer membrane performed by the spanin complex. This Escherichia coli (Bacteriophage T7) protein is Spanin, inner membrane subunit.